The primary structure comprises 956 residues: MASKRKSTTPCMIPVKTVVLQDASMEAQPAETLPEGPQQDLPPEASAASSEAAQNPSSTDGSTLANGHRSTLDGYLYSCKYCDFRSHDMTQFVGHMNSEHTDFNKDPTFVCSGCSFLAKTPEGLSLHNATCHSGEASFVWNVAKPDNHVVVEQSIPESTSTPDLAGEPSAEGADGQAEIIITKTPIMKIMKGKAEAKKIHTLKENVPSQPVGEALPKLSTGEMEVREGDHSFINGAVPVSQASASSAKNPHAANGPLIGTVPVLPAGIAQFLSLQQQPPVHAQHHVHQPLPTAKALPKVMIPLSSIPTYNAAMDSNSFLKNSFHKFPYPTKAELCYLTVVTKYPEEQLKIWFTAQRLKQGISWSPEEIEDARKKMFNTVIQSVPQPTITVLNTPLVASAGNVQHLIQAALPGHVVGQPEGTGGGLLVTQPLMANGLQATSSPLPLTVTSVPKQPGVAPINTVCSNTTSAVKVVNAAQSLLTACPSITSQAFLDASIYKNKKSHEQLSALKGSFCRNQFPGQSEVEHLTKVTGLSTREVRKWFSDRRYHCRNLKGSRAMIPGDHSSIIIDSVPEVSFSPSSKVPEVTCIPTTATLATHPSAKRQSWHQTPDFTPTKYKERAPEQLRALESSFAQNPLPLDEELDRLRSETKMTRREIDSWFSERRKKVNAEETKKAEENASQEEEEAAEDEGGEEDLASELRVSGENGSLEMPSSHILAERKVSPIKINLKNLRVTEANGRNEIPGLGACDPEDDESNKLAEQLPGKVSCKKTAQQRHLLRQLFVQTQWPSNQDYDSIMAQTGLPRPEVVRWFGDSRYALKNGQLKWYEDYKRGNFPPGLLVIAPGNRELLQDYYMTHKMLYEEDLQNLCDKTQMSSQQVKQWFAEKMGEETRAVADTGSEDQGPGTGELTAVHKGMGDTYSEVSENSESWEPRVPEASSEPFDTSSPQAGRQLETD.

A required for nuclear localization region spans residues 1-107 (MASKRKSTTP…SEHTDFNKDP (107 aa)). The tract at residues 22–66 (DASMEAQPAETLPEGPQQDLPPEASAASSEAAQNPSSTDGSTLAN) is disordered. Residues 42 to 58 (PPEASAASSEAAQNPSS) show a composition bias toward low complexity. C2H2-type zinc fingers lie at residues 77–100 (YSCK…NSEH) and 109–132 (FVCS…ATCH). The interval 242-488 (ASASSAKNPH…LLTACPSITS (247 aa)) is required for homodimerization and interaction with NFYA. The tract at residues 303 to 502 (LSSIPTYNAA…DASIYKNKKS (200 aa)) is required for repressor activity. DNA-binding regions (homeobox) lie at residues 304 to 363 (SSIP…GISW) and 494 to 553 (ASIY…RNLK). The required for nuclear localization stretch occupies residues 497–555 (YKNKKSHEQLSALKGSFCRNQFPGQSEVEHLTKVTGLSTREVRKWFSDRRYHCRNLKGS). 2 disordered regions span residues 598 to 618 (PSAK…KYKE) and 666 to 695 (KVNA…GEED). Residues serine 599 and serine 604 each carry the phosphoserine modification. A DNA-binding region (homeobox 3) is located at residues 612–671 (TPTKYKERAPEQLRALESSFAQNPLPLDEELDRLRSETKMTRREIDSWFSERRKKVNAEE). Residues 666-677 (KVNAEETKKAEE) show a composition bias toward basic and acidic residues. Residues 679–695 (ASQEEEEAAEDEGGEED) show a composition bias toward acidic residues. Serine 680, serine 708, and serine 723 each carry phosphoserine. 2 DNA-binding regions (homeobox) span residues 764-823 (PGKV…KNGQ) and 835-894 (FPPG…TRAV). The tract at residues 890-956 (ETRAVADTGS…PQAGRQLETD (67 aa)) is disordered. 2 positions are modified to phosphoserine: serine 927 and serine 946.

This sequence belongs to the ZHX family. Homodimer (via homeobox domain 1). Heterodimer with ZHX1 (via homeobox domain 1). Heterodimer with ZHX2 (via homeobox domain 1). Heterodimerization with ZHX1 is a prerequisite for repressor activity. Interacts with NFYA. In terms of tissue distribution, widely expressed. High expression in kidney. Expressed during osteogenic differentiation.

Its subcellular location is the nucleus. In terms of biological role, acts as a transcriptional repressor. Involved in the early stages of mesenchymal stem cell (MSC) osteogenic differentiation. Is a regulator of podocyte gene expression during primary glomerula disease. Binds to promoter DNA. This chain is Zinc fingers and homeoboxes protein 3 (ZHX3), found in Homo sapiens (Human).